The primary structure comprises 222 residues: Cytidylate kinase (222 aa).

10–18 (GPAGAGKST) lines the ATP pocket.

It belongs to the cytidylate kinase family. Type 1 subfamily.

The protein localises to the cytoplasm. It carries out the reaction CMP + ATP = CDP + ADP. The catalysed reaction is dCMP + ATP = dCDP + ADP. The protein is Cytidylate kinase of Halalkalibacterium halodurans (strain ATCC BAA-125 / DSM 18197 / FERM 7344 / JCM 9153 / C-125) (Bacillus halodurans).